The following is a 583-amino-acid chain: Aspartate--tRNA ligase (583 aa).

An L-aspartate-binding site is contributed by glutamate 174. The tract at residues 198–201 (QITK) is aspartate. Arginine 220 lines the L-aspartate pocket. ATP contacts are provided by residues 220-222 (RDE) and glutamine 229. Residue histidine 443 coordinates L-aspartate. Glutamate 477 contacts ATP. Residue arginine 484 coordinates L-aspartate. 529 to 532 (GLDR) contributes to the ATP binding site.

The protein belongs to the class-II aminoacyl-tRNA synthetase family. Type 1 subfamily. Homodimer.

Its subcellular location is the cytoplasm. The enzyme catalyses tRNA(Asp) + L-aspartate + ATP = L-aspartyl-tRNA(Asp) + AMP + diphosphate. Its function is as follows. Catalyzes the attachment of L-aspartate to tRNA(Asp) in a two-step reaction: L-aspartate is first activated by ATP to form Asp-AMP and then transferred to the acceptor end of tRNA(Asp). This Streptococcus thermophilus (strain CNRZ 1066) protein is Aspartate--tRNA ligase.